A 601-amino-acid chain; its full sequence is Adenine deaminase (601 aa).

It belongs to the metallo-dependent hydrolases superfamily. Adenine deaminase family. Requires Mn(2+) as cofactor.

The enzyme catalyses adenine + H2O + H(+) = hypoxanthine + NH4(+). The chain is Adenine deaminase from Ruegeria sp. (strain TM1040) (Silicibacter sp.).